Consider the following 421-residue polypeptide: UDP-N-acetylglucosamine 1-carboxyvinyltransferase (421 aa).

Residue 22–23 participates in phosphoenolpyruvate binding; sequence KN. R93 contacts UDP-N-acetyl-alpha-D-glucosamine. C117 (proton donor) is an active-site residue. Position 117 is a 2-(S-cysteinyl)pyruvic acid O-phosphothioketal (C117). UDP-N-acetyl-alpha-D-glucosamine is bound by residues 122–126, D308, and L330; that span reads RPVDL.

It belongs to the EPSP synthase family. MurA subfamily.

It is found in the cytoplasm. The enzyme catalyses phosphoenolpyruvate + UDP-N-acetyl-alpha-D-glucosamine = UDP-N-acetyl-3-O-(1-carboxyvinyl)-alpha-D-glucosamine + phosphate. It functions in the pathway cell wall biogenesis; peptidoglycan biosynthesis. Its function is as follows. Cell wall formation. Adds enolpyruvyl to UDP-N-acetylglucosamine. The chain is UDP-N-acetylglucosamine 1-carboxyvinyltransferase from Helicobacter hepaticus (strain ATCC 51449 / 3B1).